The following is a 237-amino-acid chain: Phosphatidylserine decarboxylase proenzyme (237 aa).

Serine 206 acts as the Schiff-base intermediate with substrate; via pyruvic acid in catalysis. Serine 206 carries the post-translational modification Pyruvic acid (Ser); by autocatalysis.

Belongs to the phosphatidylserine decarboxylase family. PSD-A subfamily. Heterodimer of a large membrane-associated beta subunit and a small pyruvoyl-containing alpha subunit. Requires pyruvate as cofactor. Is synthesized initially as an inactive proenzyme. Formation of the active enzyme involves a self-maturation process in which the active site pyruvoyl group is generated from an internal serine residue via an autocatalytic post-translational modification. Two non-identical subunits are generated from the proenzyme in this reaction, and the pyruvate is formed at the N-terminus of the alpha chain, which is derived from the carboxyl end of the proenzyme. The post-translation cleavage follows an unusual pathway, termed non-hydrolytic serinolysis, in which the side chain hydroxyl group of the serine supplies its oxygen atom to form the C-terminus of the beta chain, while the remainder of the serine residue undergoes an oxidative deamination to produce ammonia and the pyruvoyl prosthetic group on the alpha chain.

It localises to the cell membrane. It carries out the reaction a 1,2-diacyl-sn-glycero-3-phospho-L-serine + H(+) = a 1,2-diacyl-sn-glycero-3-phosphoethanolamine + CO2. It functions in the pathway phospholipid metabolism; phosphatidylethanolamine biosynthesis; phosphatidylethanolamine from CDP-diacylglycerol: step 2/2. Catalyzes the formation of phosphatidylethanolamine (PtdEtn) from phosphatidylserine (PtdSer). In Mycobacteroides abscessus (strain ATCC 19977 / DSM 44196 / CCUG 20993 / CIP 104536 / JCM 13569 / NCTC 13031 / TMC 1543 / L948) (Mycobacterium abscessus), this protein is Phosphatidylserine decarboxylase proenzyme.